Here is a 332-residue protein sequence, read N- to C-terminus: Small ribosomal subunit protein uS2 (332 aa).

The protein belongs to the universal ribosomal protein uS2 family.

The chain is Small ribosomal subunit protein uS2 from Nitrobacter winogradskyi (strain ATCC 25391 / DSM 10237 / CIP 104748 / NCIMB 11846 / Nb-255).